The chain runs to 59 residues: Putative zinc finger protein ORF59a (59 aa).

Residues Tyr11–Thr33 form a C2H2-type; degenerate zinc finger.

The protein is Putative zinc finger protein ORF59a of Acidianus hospitalis (AFV-1).